A 340-amino-acid polypeptide reads, in one-letter code: MISVAVNGYGTIGKRVADAILKQPDMRLVGVAKTSPNYEAFIAHRKGIKIYVPQQSIKKFEESGIPVAGTIEDLVKASDIVVDTTPNGVGAQYKPIYQQFQRNAIFQGGEKAEVADISFSALCNYDEALGKKYIRVVSCNTTALLRTICTINKVTKVEKVRATIVRRAADQKEVKKGPINSLVPDPATVPSHHAKDVNSVIKNLDIVTMAVIAPTTLMHMHFINITLKDKVEKKDVLSVLENTPRIVLISSKYDAEATAELVEVARDLKRERNDIPEVMVFDDSVYVKDNEVMLMYAVHQESIVVPENVDAIRASTRLMSAEDSIRITNESLGILKGYLI.

NAD(+)-binding positions include 11-12 and Gly109; that span reads TI. 138–140 lines the D-glyceraldehyde 3-phosphate pocket; that stretch reads SCN. Catalysis depends on Cys139, which acts as the Nucleophile. Arg167 serves as a coordination point for NAD(+). Residue 193–194 participates in D-glyceraldehyde 3-phosphate binding; sequence HA. Gln300 provides a ligand contact to NAD(+).

This sequence belongs to the glyceraldehyde-3-phosphate dehydrogenase family. As to quaternary structure, homotetramer.

It is found in the cytoplasm. It catalyses the reaction D-glyceraldehyde 3-phosphate + phosphate + NADP(+) = (2R)-3-phospho-glyceroyl phosphate + NADPH + H(+). It carries out the reaction D-glyceraldehyde 3-phosphate + phosphate + NAD(+) = (2R)-3-phospho-glyceroyl phosphate + NADH + H(+). Its pathway is carbohydrate degradation; glycolysis; pyruvate from D-glyceraldehyde 3-phosphate: step 1/5. This chain is Glyceraldehyde-3-phosphate dehydrogenase, found in Saccharolobus islandicus (strain Y.N.15.51 / Yellowstone #2) (Sulfolobus islandicus).